Reading from the N-terminus, the 386-residue chain is 2-deoxy-scyllo-inosose synthase (386 aa).

NAD(+) contacts are provided by residues Asp-42, 73 to 76 (EEHK), 105 to 109 (GVTGN), 129 to 130 (TT), 140 to 142 (SLK), and 151 to 152 (KN). The active site involves Lys-142. Glu-184 contributes to the Co(2+) binding site. Glu-244 is an active-site residue. The Co(2+) site is built by His-247 and His-263.

The protein belongs to the sugar phosphate cyclases superfamily. DOI synthase family. Requires NAD(+) as cofactor. It depends on Co(2+) as a cofactor.

The catalysed reaction is D-glucose 6-phosphate = 2-deoxy-L-scyllo-inosose + phosphate. The protein operates within metabolic intermediate biosynthesis; 2-deoxystreptamine biosynthesis; 2-deoxystreptamine from D-glucose 6-phosphate: step 1/4. Its pathway is antibiotic biosynthesis; tobramycin biosynthesis. Catalyzes the intramolecular carbocycle formation from D-glucose-6-phosphate to 2-deoxy-scyllo-inosose (DOI). The polypeptide is 2-deoxy-scyllo-inosose synthase (tbmA) (Streptoalloteichus tenebrarius (strain ATCC 17920 / DSM 40477 / JCM 4838 / CBS 697.72 / NBRC 16177 / NCIMB 11028 / NRRL B-12390 / A12253. 1 / ISP 5477) (Streptomyces tenebrarius)).